A 251-amino-acid polypeptide reads, in one-letter code: Ribosome maturation factor RimP (251 aa).

The segment at 176 to 251 (SLRRGSAPPQ…ARLKNRDTLH (76 aa)) is disordered. Positions 186–196 (DGEEGDEEEGA) are enriched in acidic residues. The segment covering 216–226 (PKLDKKSDKPV) has biased composition (basic and acidic residues).

Belongs to the RimP family.

The protein localises to the cytoplasm. Required for maturation of 30S ribosomal subunits. The chain is Ribosome maturation factor RimP from Methylorubrum extorquens (strain PA1) (Methylobacterium extorquens).